A 261-amino-acid chain; its full sequence is tRNA pseudouridine synthase A (261 aa).

The active-site Nucleophile is D51. Y109 provides a ligand contact to substrate.

Belongs to the tRNA pseudouridine synthase TruA family. Homodimer.

It carries out the reaction uridine(38/39/40) in tRNA = pseudouridine(38/39/40) in tRNA. Formation of pseudouridine at positions 38, 39 and 40 in the anticodon stem and loop of transfer RNAs. The sequence is that of tRNA pseudouridine synthase A from Shewanella pealeana (strain ATCC 700345 / ANG-SQ1).